Here is a 378-residue protein sequence, read N- to C-terminus: Packaging protein 3 (378 aa).

2 disordered regions span residues 1–73 (MHPV…EGPV) and 355–378 (SRPP…DDFI). The tract at residues 1-178 (MHPVLQSVRN…AFGEELRNTC (178 aa)) is interaction with packaging protein 1. 2 stretches are compositionally biased toward low complexity: residues 16–35 (GGPH…SVRR) and 49–58 (PGAGATPTAG). A Phosphoserine; by host modification is found at Ser-362. A compositionally biased stretch (acidic residues) spans 363-378 (FADEGPSESDDEDDFI).

It belongs to the adenoviridae packaging protein 3 family. Part of the genome packaging complex composed of packaging proteins 1, 2 and 3; this complex specifically binds to the packaging sequence on the left end of viral genomic DNA and performs packaging of the viral genome. Interacts with hexon-linking protein IIIa; this interaction is required to promote correct genome packaging. Post-translationally, cleaved at different sites by the viral protease during virion maturation.

Its subcellular location is the host nucleus. Its function is as follows. Involved in viral genome packaging through its interaction with packaging proteins 1 and 2. After proteolytic cleavage by adenovirus protease, L1 52/55k protein is removed from the capsid during viral maturation. In Galliformes (FAdV-1), this protein is Packaging protein 3.